The sequence spans 150 residues: Ribonuclease H (150 aa).

The RNase H type-1 domain maps to 1-146 (MPELFAYTDG…ADELARAGMA (146 aa)). Mg(2+) is bound by residues D9, E52, D74, and D138.

The protein belongs to the RNase H family. In terms of assembly, monomer. Requires Mg(2+) as cofactor.

The protein resides in the cytoplasm. The enzyme catalyses Endonucleolytic cleavage to 5'-phosphomonoester.. Its function is as follows. Endonuclease that specifically degrades the RNA of RNA-DNA hybrids. The protein is Ribonuclease H of Roseobacter denitrificans (strain ATCC 33942 / OCh 114) (Erythrobacter sp. (strain OCh 114)).